A 130-amino-acid chain; its full sequence is Small ribosomal subunit protein uS11c (130 aa).

This sequence belongs to the universal ribosomal protein uS11 family. In terms of assembly, part of the 30S ribosomal subunit.

It localises to the plastid. It is found in the chloroplast. This chain is Small ribosomal subunit protein uS11c, found in Bigelowiella natans (Pedinomonas minutissima).